The sequence spans 310 residues: ADP-L-glycero-D-manno-heptose-6-epimerase (310 aa).

Residues 10-11 (FI), 31-32 (DN), lysine 38, lysine 53, 75-79 (EGACS), and asparagine 92 contribute to the NADP(+) site. Tyrosine 140 serves as the catalytic Proton acceptor. Residue lysine 144 coordinates NADP(+). Asparagine 169 lines the substrate pocket. Positions 170 and 178 each coordinate NADP(+). The active-site Proton acceptor is lysine 178. Substrate is bound by residues serine 180, histidine 187, 201 to 204 (FSGS), arginine 209, and tyrosine 272.

Belongs to the NAD(P)-dependent epimerase/dehydratase family. HldD subfamily. Homopentamer. NADP(+) is required as a cofactor.

The enzyme catalyses ADP-D-glycero-beta-D-manno-heptose = ADP-L-glycero-beta-D-manno-heptose. It functions in the pathway nucleotide-sugar biosynthesis; ADP-L-glycero-beta-D-manno-heptose biosynthesis; ADP-L-glycero-beta-D-manno-heptose from D-glycero-beta-D-manno-heptose 7-phosphate: step 4/4. Catalyzes the interconversion between ADP-D-glycero-beta-D-manno-heptose and ADP-L-glycero-beta-D-manno-heptose via an epimerization at carbon 6 of the heptose. This Pectobacterium carotovorum subsp. carotovorum (strain PC1) protein is ADP-L-glycero-D-manno-heptose-6-epimerase.